The sequence spans 72 residues: Translation initiation factor IF-1 (72 aa).

In terms of domain architecture, S1-like spans 1-72; the sequence is MTKEDSFEMH…SKGRIIFRSR (72 aa).

This sequence belongs to the IF-1 family. As to quaternary structure, component of the 30S ribosomal translation pre-initiation complex which assembles on the 30S ribosome in the order IF-2 and IF-3, IF-1 and N-formylmethionyl-tRNA(fMet); mRNA recruitment can occur at any time during PIC assembly.

The protein resides in the cytoplasm. In terms of biological role, one of the essential components for the initiation of protein synthesis. Stabilizes the binding of IF-2 and IF-3 on the 30S subunit to which N-formylmethionyl-tRNA(fMet) subsequently binds. Helps modulate mRNA selection, yielding the 30S pre-initiation complex (PIC). Upon addition of the 50S ribosomal subunit IF-1, IF-2 and IF-3 are released leaving the mature 70S translation initiation complex. This Blochmanniella pennsylvanica (strain BPEN) protein is Translation initiation factor IF-1.